The sequence spans 429 residues: Glutamate-1-semialdehyde 2,1-aminomutase 2 (429 aa).

Position 268 is an N6-(pyridoxal phosphate)lysine (Lys268).

It belongs to the class-III pyridoxal-phosphate-dependent aminotransferase family. HemL subfamily. Homodimer. Pyridoxal 5'-phosphate serves as cofactor.

Its subcellular location is the cytoplasm. The catalysed reaction is (S)-4-amino-5-oxopentanoate = 5-aminolevulinate. The protein operates within porphyrin-containing compound metabolism; protoporphyrin-IX biosynthesis; 5-aminolevulinate from L-glutamyl-tRNA(Glu): step 2/2. The protein is Glutamate-1-semialdehyde 2,1-aminomutase 2 of Staphylococcus epidermidis (strain ATCC 35984 / DSM 28319 / BCRC 17069 / CCUG 31568 / BM 3577 / RP62A).